Here is a 926-residue protein sequence, read N- to C-terminus: Progesterone receptor (926 aa).

Positions 1–48 (MTELQAKDPQVLHTSGASPSPPHIGSPLLARLDSGPFQGSQHSDVSSV) are disordered. The tract at residues 1–165 (MTELQAKDPQ…PATKGLLSPL (165 aa)) is AF3; mediates transcriptional activation (in isoform B). The segment at 1–559 (MTELQAKDPQ…YGFDSLPQKI (559 aa)) is modulating, Pro-Rich. Residue Lys-7 forms a Glycyl lysine isopeptide (Lys-Gly) (interchain with G-Cter in SUMO) linkage. Ser-20 bears the Phosphoserine mark. The LXXL motif 1 motif lies at 56-60 (LDGLL). Ser-82 bears the Phosphoserine mark. Residues 116-120 (LDSLL) carry the LXXL motif 1 motif. 2 positions are modified to phosphoserine: Ser-131 and Ser-163. The segment at 166 to 305 (MSRPEIKAGD…LATTVVDFIH (140 aa)) is mediates transcriptional transrepression (in isoform A). Residues 168 to 256 (RPEIKAGDSS…GTGSGGGVAA (89 aa)) form a disordered region. Residues 184 to 188 (KVLPK) carry the Nuclear localization signal motif. Ser-191 and Ser-214 each carry phosphoserine. Phosphoserine; by MAPK1 is present on Ser-294. A disordered region spans residues 327-364 (DSYDGGATAQGPFAPPRGSPSAPSPPVPCGDFPDCTYP). A compositionally biased stretch (pro residues) spans 339-354 (FAPPRGSPSAPSPPVP). Ser-345 carries the post-translational modification Phosphoserine; by MAPK. A Glycyl lysine isopeptide (Lys-Gly) (interchain with G-Cter in SUMO); alternate cross-link involves residue Lys-388. Lys-388 is covalently cross-linked (Glycyl lysine isopeptide (Lys-Gly) (interchain with G-Cter in ubiquitin); alternate). Residues 391-447 (EEGADAAVRSPRPYLSAGASSSTFPDFPLAPAPQRAPSSRPGEAAVAGGPSSAAVSP) form a disordered region. Ser-400 bears the Phosphoserine; by CDK2 mark. Over residues 422–447 (APQRAPSSRPGEAAVAGGPSSAAVSP) the composition is skewed to low complexity. Residues 453 to 539 (SALECILYKA…VYPPYLNYLR (87 aa)) are AF1; mediates transcriptional activation. A Glycyl lysine isopeptide (Lys-Gly) (interchain with G-Cter in SUMO) cross-link involves residue Lys-524. The segment at residues 557-632 (QKICLICGDE…AGMVLGGRKF (76 aa)) is a DNA-binding region (nuclear receptor). 2 consecutive NR C4-type zinc fingers follow at residues 560-580 (CLIC…CGSC) and 596-615 (CAGR…CPAC). A Phosphoserine modification is found at Ser-669. An NR LBD domain is found at 672-906 (QEIQLVPPLI…EFPEMMSEVI (235 aa)). The segment at 673-926 (EIQLVPPLIN…MVKPLLFHKK (254 aa)) is AF2; mediates transcriptional activation. Arg-759 serves as a coordination point for progesterone.

This sequence belongs to the nuclear hormone receptor family. NR3 subfamily. As to quaternary structure, interacts with SMARD1 and UNC45A. Interacts with CUEDC2; the interaction promotes ubiquitination, decreases sumoylation, and represses transcriptional activity. Interacts with PIAS3; the interaction promotes sumoylation of PR in a hormone-dependent manner, inhibits DNA-binding, and alters nuclear export. Interacts with SP1; the interaction requires ligand-induced phosphorylation on Ser-294 by ERK1/2 MAPK. Interacts with PRMT2. Isoform A interacts with NCOR2. Isoform B (but not isoform A) interacts with NCOA2 and NCOA1. Isoform B (but not isoform A) interacts with KLF9. In terms of processing, phosphorylated on multiple serine sites. Several of these sites are hormone-dependent. Phosphorylation on Ser-294 is highly hormone-dependent and modulates ubiquitination and sumoylation on Lys-388. Phosphorylation on Ser-345 also requires induction by hormone. Basal phosphorylation on Ser-82, Ser-163, Ser-191 and Ser-400 is increased in response to progesterone and can be phosphorylated in vitro by the CDK2-A1 complex. Increased levels of phosphorylation on Ser-400 also in the presence of EGF, heregulin, IGF, PMA and FBS. Phosphorylation at this site by CDK2 is ligand-independent, and increases nuclear translocation and transcriptional activity. Phosphorylation at Ser-163 and Ser-294, but not at Ser-191, is impaired during the G(2)/M phase of the cell cycle. Phosphorylation on Ser-345 by ERK1/2 MAPK is required for interaction with SP1. Sumoylation is hormone-dependent and represses transcriptional activity. Sumoylation on all three sites is enhanced by PIAS3. Desumoylated by SENP1. Sumoylation on Lys-388, the main site of sumoylation, is repressed by ubiquitination on the same site, and modulated by phosphorylation at Ser-294. Post-translationally, ubiquitination is hormone-dependent and represses sumoylation on the same site. Promoted by MAPK-mediated phosphorylation on Ser-294. Ubiquitinated by UBR5, leading to its degradation: UBR5 specifically recognizes and binds ligand-bound PGR when it is not associated with coactivators (NCOAs). In presence of NCOAs, the UBR5-degron is not accessible, preventing its ubiquitination and degradation. In terms of processing, palmitoylated by ZDHHC7 and ZDHHC21. Palmitoylation is required for plasma membrane targeting and for rapid intracellular signaling via ERK and AKT kinases and cAMP generation. Expression of isoform A and isoform B in mammary epithelial cells is temporally and spatially separated during normal mammary gland development. Isoform A and isoform B are expressed in the pituitary. Isoform A and isoform B are differentially expressed in the ovary and oviduct, and the level of expression is dependent on both the cell type and estrous cycle stage.

The protein resides in the nucleus. It localises to the cytoplasm. The steroid hormones and their receptors are involved in the regulation of eukaryotic gene expression and affect cellular proliferation and differentiation in target tissues. Depending on the isoform, progesterone receptor functions as a transcriptional activator or repressor. In terms of biological role, ligand-dependent transdominant repressor of steroid hormone receptor transcriptional activity including repression of its isoform B, MR and ER. Transrepressional activity may involve recruitment of corepressor NCOR2. Functionally, transcriptional activator of several progesteron-dependent promoters in a variety of cell types. Involved in activation of SRC-dependent MAPK signaling on hormone stimulation. This is Progesterone receptor (Pgr) from Mus musculus (Mouse).